The following is an 84-amino-acid chain: Mitochondrial import inner membrane translocase subunit Tim9 (84 aa).

Residues 28 to 52 (CFMDCVKDFTTREVKPEETTCSESC) carry the Twin CX3C motif motif. Disulfide bonds link cysteine 28/cysteine 52 and cysteine 32/cysteine 48.

The protein belongs to the small Tim family. Heterohexamer; composed of 3 copies of TIMM9 and 3 copies of TIMM10/TIM10A, named soluble 70 kDa complex. The complex forms a 6-bladed alpha-propeller structure and associates with the TIMM22 component of the TIM22 complex. Interacts with multi-pass transmembrane proteins in transit.

It localises to the mitochondrion inner membrane. Its function is as follows. Mitochondrial intermembrane chaperone that participates in the import and insertion of multi-pass transmembrane proteins into the mitochondrial inner membrane. May also be required for the transfer of beta-barrel precursors from the TOM complex to the sorting and assembly machinery (SAM complex) of the outer membrane. Acts as a chaperone-like protein that protects the hydrophobic precursors from aggregation and guide them through the mitochondrial intermembrane space. The chain is Mitochondrial import inner membrane translocase subunit Tim9 (timm9) from Danio rerio (Zebrafish).